A 120-amino-acid polypeptide reads, in one-letter code: Large ribosomal subunit protein uL22 (120 aa).

The protein belongs to the universal ribosomal protein uL22 family. In terms of assembly, part of the 50S ribosomal subunit.

In terms of biological role, this protein binds specifically to 23S rRNA; its binding is stimulated by other ribosomal proteins, e.g. L4, L17, and L20. It is important during the early stages of 50S assembly. It makes multiple contacts with different domains of the 23S rRNA in the assembled 50S subunit and ribosome. Functionally, the globular domain of the protein is located near the polypeptide exit tunnel on the outside of the subunit, while an extended beta-hairpin is found that lines the wall of the exit tunnel in the center of the 70S ribosome. The polypeptide is Large ribosomal subunit protein uL22 (Oenococcus oeni (strain ATCC BAA-331 / PSU-1)).